The following is a 247-amino-acid chain: MNKFEFNLENFDGPLDLLLSLVKDKKADLFTIDLADLATQYLEIINHLEDSNVDVASEYLVMAATLIHIKAKMLLLNPEEEDEEIKEDKEMLLKQLIEYQQFKEVAKKLRQQESIRSEIFIKDPSNYDEYYRETDETLLDGRSNSLSLMNTLRKMFERVHAENLRQTKIEAVHVNPEQRIKEIRDLFDEFGEEVDFAKIFNVPTITHFVITFLVLLDLARKQEIKLIQDKEFGEIRIIKIKGVENEQ.

This sequence belongs to the ScpA family. Component of a cohesin-like complex composed of ScpA, ScpB and the Smc homodimer, in which ScpA and ScpB bind to the head domain of Smc. The presence of the three proteins is required for the association of the complex with DNA.

It localises to the cytoplasm. Its function is as follows. Participates in chromosomal partition during cell division. May act via the formation of a condensin-like complex containing Smc and ScpB that pull DNA away from mid-cell into both cell halves. In Mycoplasma mobile (strain ATCC 43663 / 163K / NCTC 11711) (Mesomycoplasma mobile), this protein is Segregation and condensation protein A.